We begin with the raw amino-acid sequence, 342 residues long: Palmitoyltransferase PFA4 (342 aa).

Topologically, residues 1 to 8 (MITFSNPW) are cytoplasmic. A helical membrane pass occupies residues 9-29 (IGVIIPCIIIFTLSTFSAIYI). The Lumenal segment spans residues 30–38 (LPHHVSNNE). A helical transmembrane segment spans residues 39–59 (LTLFICASAMVWISYIIAIIV). Topologically, residues 60–124 (PPGSPPKNYT…GHRNMPHFMR (65 aa)) are cytoplasmic. The DHHC domain occupies 77–127 (MYCLKCKAYKPERTHHSKALGVCVLKMDHHCPWTNNTVGHRNMPHFMRFLV). The active-site S-palmitoyl cysteine intermediate is cysteine 107. Residues 125–145 (FLVWVDMTVGYLFIRLCIRIM) form a helical membrane-spanning segment. Residues 146 to 162 (KLWRDKHLPSYLFDKTE) lie on the Lumenal side of the membrane. Residues 163-183 (VILSIVFLPASFFVLFTVGIL) form a helical membrane-spanning segment. Topologically, residues 184-342 (TIRVFVNMCN…ADFGVEHTDI (159 aa)) are cytoplasmic.

It belongs to the DHHC palmitoyltransferase family. PFA4 subfamily.

The protein resides in the endoplasmic reticulum membrane. The enzyme catalyses L-cysteinyl-[protein] + hexadecanoyl-CoA = S-hexadecanoyl-L-cysteinyl-[protein] + CoA. In terms of biological role, mediates the reversible addition of palmitate to target proteins, thereby regulating their membrane association and biological function. The sequence is that of Palmitoyltransferase PFA4 from Yarrowia lipolytica (strain CLIB 122 / E 150) (Yeast).